A 772-amino-acid polypeptide reads, in one-letter code: Glucocorticoid receptor (772 aa).

Over residues 1–15 (MDSKESLSPPGREEV) the composition is skewed to basic and acidic residues. The tract at residues 1 to 22 (MDSKESLSPPGREEVPSSVLRP) is disordered. Residues 1–415 (MDSKESLSPP…TTAAGPPPKL (415 aa)) are modulating. Arg25 carries the post-translational modification Omega-N-methylarginine. The segment at 39–82 (APVRVPASSPSLAPAAQPDSKQQRLAVDFPKGSASNAQQPDLSR) is disordered. Residues 44–58 (PASSPSLAPAAQPDS) are compositionally biased toward low complexity. Residues Ser47, Ser115, Ser136, and Ser143 each carry the phosphoserine modification. A disordered region spans residues 132-186 (NRSASGADNPRSTAPAAGSAAPTEGFPKTHSDLASERQNPKGQTGGSAGSAKLHP). Low complexity predominate over residues 143 to 156 (STAPAAGSAAPTEG). Residues 158 to 170 (PKTHSDLASERQN) are compositionally biased toward basic and acidic residues. Residues Ser203, Ser211, and Ser226 each carry the phosphoserine modification. A Glycyl lysine isopeptide (Lys-Gly) (interchain with G-Cter in SUMO2) cross-link involves residue Lys258. Glycyl lysine isopeptide (Lys-Gly) (interchain with G-Cter in SUMO); alternate cross-links involve residues Lys277 and Lys293. Glycyl lysine isopeptide (Lys-Gly) (interchain with G-Cter in SUMO2); alternate cross-links involve residues Lys277 and Lys293. Phosphoserine occurs at positions 307 and 400. Residue Lys414 forms a Glycyl lysine isopeptide (Lys-Gly) (interchain with G-Cter in ubiquitin) linkage. 2 consecutive NR C4-type zinc fingers follow at residues 416–436 (CLVC…CGSC) and 452–476 (CAGR…YRKC). Positions 416-481 (CLVCSDEASG…RYRKCLQAGM (66 aa)) form a DNA-binding region, nuclear receptor. Residues Lys475, Lys487, Lys489, and Lys490 each carry the N6-acetyllysine modification. Residues 480-772 (GMNLEARKTK…NIKKLLFHQK (293 aa)) are interaction with CLOCK. The segment at 482–518 (NLEARKTKKKIKGIQQTSTGVSQETSENPSNRTVVPA) is hinge. The disordered stretch occupies residues 494–513 (GIQQTSTGVSQETSENPSNR). The segment covering 499 to 513 (STGVSQETSENPSNR) has biased composition (polar residues). The NR LBD domain occupies 519 to 753 (ALPQLTPTLV…FPEMLAEIIT (235 aa)). The tract at residues 527-692 (LVSLLEVIEP…EIRMTYIKEL (166 aa)) is interaction with CRY1. A Glycyl lysine isopeptide (Lys-Gly) (interchain with G-Cter in SUMO) cross-link involves residue Lys698.

Belongs to the nuclear hormone receptor family. NR3 subfamily. Heteromultimeric cytoplasmic complex with HSP90AA1, HSPA1A/HSPA1B, and FKBP5 or another immunophilin such as PPID, STIP1, or the immunophilin homolog PPP5C. Upon ligand binding FKBP5 dissociates from the complex and FKBP4 takes its place, thereby linking the complex to dynein and mediating transport to the nucleus, where the complex dissociates. Probably forms a complex composed of chaperones HSP90 and HSP70, co-chaperones CDC37, PPP5C, TSC1 and client protein TSC2, CDK4, AKT, RAF1 and NR3C1; this complex does not contain co-chaperones STIP1/HOP and PTGES3/p23. Directly interacts with UNC45A. Binds to DNA as a homodimer, and as heterodimer with NR3C2 or the retinoid X receptor. Binds STAT5A and STAT5B homodimers and heterodimers. Interacts with NRIP1, POU2F1, POU2F2 and TRIM28. Interacts with several coactivator complexes, including the SMARCA4 complex, CREBBP/EP300, TADA2L (Ada complex) and p160 coactivators such as NCOA2 and NCOA6. Interaction with BAG1 inhibits transactivation. Interacts with HEXIM1 and TGFB1I1. Interacts with NCOA1. Interacts with NCOA3, SMARCA4, SMARCC1, SMARCD1, and SMARCE1. Interacts with CLOCK, CRY1 and CRY2 in a ligand-dependent fashion. Interacts with CIART. Interacts with RWDD3. Interacts with UBE2I/UBC9 and this interaction is enhanced in the presence of RWDD3. Interacts with GRIP1. Interacts with NR4A3 (via nuclear receptor DNA-binding domain), represses transcription activity of NR4A3 on the POMC promoter Nur response element (NurRE). Directly interacts with PNRC2 to attract and form a complex with UPF1 and DCP1A; the interaction leads to rapid mRNA degradation. Interacts with GSK3B. Interacts with FNIP1 and FNIP2. Interacts (via C-terminus) with HNRNPU (via C-terminus). Interacts with MCM3AP. Interacts (via domain NR LBD) with HSP90AA1 and HSP90AB1. In the absence of hormonal ligand, interacts with TACC1. Interacts (via NR LBD domain) with ZNF764 (via KRAB domain); the interaction regulates transcription factor activity of NR3C1 by directing its actions toward certain biologic pathways. Acetylation by CLOCK reduces its binding to glucocorticoid response elements and its transcriptional activity. In terms of processing, increased proteasome-mediated degradation in response to glucocorticoids. Post-translationally, phosphorylated in the absence of hormone; becomes hyperphosphorylated in the presence of glucocorticoid. The Ser-203, Ser-226 and Ser-399-phosphorylated forms are mainly cytoplasmic, and the Ser-211-phosphorylated form is nuclear. Phosphorylation at Ser-211 increases transcriptional activity. Phosphorylation at Ser-203, Ser-226 and Ser-399 decreases signaling capacity. Phosphorylation at Ser-399 may protect from glucocorticoid-induced apoptosis. Phosphorylation at Ser-203 and Ser-211 is not required in regulation of chromosome segregation. May be dephosphorylated by PPP5C, attenuates NR3C1 action. Ubiquitinated by UBR5, leading to its degradation: UBR5 specifically recognizes and binds ligand-bound NR3C1 when it is not associated with coactivators (NCOAs). In presence of NCOAs, the UBR5-degron is not accessible, preventing its ubiquitination and degradation. In terms of processing, sumoylation at Lys-277 and Lys-293 negatively regulates its transcriptional activity. Sumoylation at Lys-698 positively regulates its transcriptional activity in the presence of RWDD3. Sumoylation at Lys-277 and Lys-293 is dispensable whereas sumoylation at Lys-698 is critical for the stimulatory effect of RWDD3 on its transcriptional activity. Heat shock increases sumoylation in a RWDD3-dependent manner.

The protein localises to the cytoplasm. It localises to the nucleus. Its subcellular location is the mitochondrion. It is found in the cytoskeleton. The protein resides in the spindle. The protein localises to the microtubule organizing center. It localises to the centrosome. Its subcellular location is the chromosome. It is found in the nucleoplasm. Receptor for glucocorticoids (GC). Has a dual mode of action: as a transcription factor that binds to glucocorticoid response elements (GRE), both for nuclear and mitochondrial DNA, and as a modulator of other transcription factors. Affects inflammatory responses, cellular proliferation and differentiation in target tissues. Involved in chromatin remodeling. Plays a role in rapid mRNA degradation by binding to the 5' UTR of target mRNAs and interacting with PNRC2 in a ligand-dependent manner which recruits the RNA helicase UPF1 and the mRNA-decapping enzyme DCP1A, leading to RNA decay. Could act as a coactivator for STAT5-dependent transcription upon growth hormone (GH) stimulation and could reveal an essential role of hepatic GR in the control of body growth. Mediates glucocorticoid-induced apoptosis. Promotes accurate chromosome segregation during mitosis. May act as a tumor suppressor. May play a negative role in adipogenesis through the regulation of lipolytic and antilipogenic gene expression. The protein is Glucocorticoid receptor (NR3C1) of Oryctolagus cuniculus (Rabbit).